The chain runs to 561 residues: Arginine--tRNA ligase (561 aa).

Positions 135-145 match the 'HIGH' region motif; the sequence is ANPTGLLHMGN.

It belongs to the class-I aminoacyl-tRNA synthetase family. In terms of assembly, monomer.

It is found in the cytoplasm. It catalyses the reaction tRNA(Arg) + L-arginine + ATP = L-arginyl-tRNA(Arg) + AMP + diphosphate. This Desulfitobacterium hafniense (strain DSM 10664 / DCB-2) protein is Arginine--tRNA ligase.